Consider the following 572-residue polypeptide: Dihydroxy-acid dehydratase (572 aa).

Cys57 contributes to the [2Fe-2S] cluster binding site. Mg(2+) is bound at residue Asp89. Residue Cys130 participates in [2Fe-2S] cluster binding. Positions 131 and 132 each coordinate Mg(2+). Lys132 is subject to N6-carboxylysine. Cys202 contacts [2Fe-2S] cluster. Glu453 provides a ligand contact to Mg(2+). The active-site Proton acceptor is the Ser479.

It belongs to the IlvD/Edd family. In terms of assembly, homodimer. [2Fe-2S] cluster is required as a cofactor. It depends on Mg(2+) as a cofactor.

The catalysed reaction is (2R)-2,3-dihydroxy-3-methylbutanoate = 3-methyl-2-oxobutanoate + H2O. It carries out the reaction (2R,3R)-2,3-dihydroxy-3-methylpentanoate = (S)-3-methyl-2-oxopentanoate + H2O. It participates in amino-acid biosynthesis; L-isoleucine biosynthesis; L-isoleucine from 2-oxobutanoate: step 3/4. Its pathway is amino-acid biosynthesis; L-valine biosynthesis; L-valine from pyruvate: step 3/4. Its function is as follows. Functions in the biosynthesis of branched-chain amino acids. Catalyzes the dehydration of (2R,3R)-2,3-dihydroxy-3-methylpentanoate (2,3-dihydroxy-3-methylvalerate) into 2-oxo-3-methylpentanoate (2-oxo-3-methylvalerate) and of (2R)-2,3-dihydroxy-3-methylbutanoate (2,3-dihydroxyisovalerate) into 2-oxo-3-methylbutanoate (2-oxoisovalerate), the penultimate precursor to L-isoleucine and L-valine, respectively. This chain is Dihydroxy-acid dehydratase, found in Streptococcus thermophilus (strain CNRZ 1066).